Here is a 303-residue protein sequence, read N- to C-terminus: Cytosolic Fe-S cluster assembly factor CFD1 (303 aa).

15–22 lines the ATP pocket; the sequence is GKGGVGKS. Residues Cys-199 and Cys-202 each contribute to the [4Fe-4S] cluster site.

This sequence belongs to the Mrp/NBP35 ATP-binding proteins family. NUBP2/CFD1 subfamily. As to quaternary structure, heterotetramer of 2 NBP35 and 2 CFD1 chains. The cofactor is [4Fe-4S] cluster.

It is found in the cytoplasm. Functionally, component of the cytosolic iron-sulfur (Fe/S) protein assembly (CIA) machinery. Required for maturation of extramitochondrial Fe-S proteins. The NBP35-CFD1 heterotetramer forms a Fe-S scaffold complex, mediating the de novo assembly of an Fe-S cluster and its transfer to target apoproteins. The polypeptide is Cytosolic Fe-S cluster assembly factor CFD1 (Chaetomium globosum (strain ATCC 6205 / CBS 148.51 / DSM 1962 / NBRC 6347 / NRRL 1970) (Soil fungus)).